A 559-amino-acid chain; its full sequence is O-fucosyltransferase 37 (559 aa).

The chain crosses the membrane as a helical; Signal-anchor for type II membrane protein span at residues 53–73 (FFLLLISLSLVFSGISFLTFS). Asn126 carries N-linked (GlcNAc...) asparagine glycosylation. 331 to 333 (HLR) provides a ligand contact to substrate. N-linked (GlcNAc...) asparagine glycans are attached at residues Asn372, Asn403, Asn447, and Asn504.

The protein belongs to the glycosyltransferase GT106 family.

It localises to the membrane. It functions in the pathway glycan metabolism. This Arabidopsis thaliana (Mouse-ear cress) protein is O-fucosyltransferase 37.